The primary structure comprises 426 residues: Histidine--tRNA ligase (426 aa).

It belongs to the class-II aminoacyl-tRNA synthetase family. As to quaternary structure, homodimer.

It localises to the cytoplasm. The enzyme catalyses tRNA(His) + L-histidine + ATP = L-histidyl-tRNA(His) + AMP + diphosphate + H(+). The sequence is that of Histidine--tRNA ligase from Colwellia psychrerythraea (strain 34H / ATCC BAA-681) (Vibrio psychroerythus).